We begin with the raw amino-acid sequence, 623 residues long: Chaperone protein DnaK (623 aa).

Thr197 is subject to Phosphothreonine; by autocatalysis. The disordered stretch occupies residues 600-623 (KKDENAGANGGNKKDDDVIDAEVE).

It belongs to the heat shock protein 70 family.

In terms of biological role, acts as a chaperone. The chain is Chaperone protein DnaK from Campylobacter concisus (strain 13826).